Here is a 377-residue protein sequence, read N- to C-terminus: tRNA(Met) cytidine acetate ligase (377 aa).

ATP is bound by residues 7 to 20 (ITEY…HLFH), Gly-100, Asn-153, and Arg-178.

Belongs to the TmcAL family.

It localises to the cytoplasm. The enzyme catalyses cytidine(34) in elongator tRNA(Met) + acetate + ATP = N(4)-acetylcytidine(34) in elongator tRNA(Met) + AMP + diphosphate. Functionally, catalyzes the formation of N(4)-acetylcytidine (ac(4)C) at the wobble position of elongator tRNA(Met), using acetate and ATP as substrates. First activates an acetate ion to form acetyladenylate (Ac-AMP) and then transfers the acetyl group to tRNA to form ac(4)C34. The chain is tRNA(Met) cytidine acetate ligase from Staphylococcus epidermidis (strain ATCC 35984 / DSM 28319 / BCRC 17069 / CCUG 31568 / BM 3577 / RP62A).